The chain runs to 947 residues: Leucine-rich repeat-containing protein 37B (947 aa).

An N-terminal signal peptide occupies residues 1–27 (MSWLRFWGPWPLLTWQLLSLLVKEAQP). Residues 28-905 (LVWVKDPLQL…EVPGDDYKNK (878 aa)) are Extracellular-facing. Disordered stretches follow at residues 42-88 (LGPP…ALPQ), 226-257 (YLSM…QVGL), 294-458 (EVEP…PEPT), and 484-514 (SLTE…EQKA). Residues 311-320 (SMESLAQTPL) show a composition bias toward polar residues. Asn-358 carries N-linked (GlcNAc...) asparagine glycosylation. 3 stretches are compositionally biased toward polar residues: residues 404–415 (GQAQHSHLTEAT), 436–445 (SPTTEETSAQ), and 495–507 (LESS…QSET). LRR repeat units lie at residues 556 to 577 (IFTT…VWKA), 580 to 601 (WTEK…SFEG), 604 to 625 (YLQY…TFES), 628 to 649 (FLQY…TFQA), 655 to 676 (FLHN…YLFE), and 679 to 699 (ALKY…KNIL). The N-linked (GlcNAc...) asparagine glycan is linked to Asn-789. A coiled-coil region spans residues 867-897 (DTDQQKTNYINENMEQNEQKEQKSSELMKEV). A helical membrane pass occupies residues 906–926 (LIFAISVTVILIILIIIFCLI). Residues 927-947 (EVNSHKRASEKYKDNPSISGA) lie on the Cytoplasmic side of the membrane.

Its subcellular location is the membrane. This Homo sapiens (Human) protein is Leucine-rich repeat-containing protein 37B (LRRC37B).